The chain runs to 293 residues: Ribosomal protein L11 methyltransferase (293 aa).

Threonine 145, glycine 166, aspartate 188, and asparagine 230 together coordinate S-adenosyl-L-methionine.

It belongs to the methyltransferase superfamily. PrmA family.

The protein localises to the cytoplasm. It catalyses the reaction L-lysyl-[protein] + 3 S-adenosyl-L-methionine = N(6),N(6),N(6)-trimethyl-L-lysyl-[protein] + 3 S-adenosyl-L-homocysteine + 3 H(+). In terms of biological role, methylates ribosomal protein L11. The chain is Ribosomal protein L11 methyltransferase from Enterobacter sp. (strain 638).